The sequence spans 1203 residues: DNA-directed RNA polymerase subunit beta' (1203 aa).

Residues Cys60, Cys62, Cys75, and Cys78 each contribute to the Zn(2+) site. Mg(2+) is bound by residues Asp449, Asp451, and Asp453. Cys818, Cys892, Cys899, and Cys902 together coordinate Zn(2+).

The protein belongs to the RNA polymerase beta' chain family. In terms of assembly, the RNAP catalytic core consists of 2 alpha, 1 beta, 1 beta' and 1 omega subunit. When a sigma factor is associated with the core the holoenzyme is formed, which can initiate transcription. It depends on Mg(2+) as a cofactor. Zn(2+) is required as a cofactor.

The enzyme catalyses RNA(n) + a ribonucleoside 5'-triphosphate = RNA(n+1) + diphosphate. DNA-dependent RNA polymerase catalyzes the transcription of DNA into RNA using the four ribonucleoside triphosphates as substrates. This Bacillus cereus (strain ATCC 14579 / DSM 31 / CCUG 7414 / JCM 2152 / NBRC 15305 / NCIMB 9373 / NCTC 2599 / NRRL B-3711) protein is DNA-directed RNA polymerase subunit beta'.